The following is a 337-amino-acid chain: Inositol 2-dehydrogenase (337 aa).

It belongs to the Gfo/Idh/MocA family. Homotetramer.

It catalyses the reaction myo-inositol + NAD(+) = scyllo-inosose + NADH + H(+). Its function is as follows. Involved in the oxidation of myo-inositol (MI) to 2-keto-myo-inositol (2KMI or 2-inosose). This chain is Inositol 2-dehydrogenase, found in Burkholderia cenocepacia (strain HI2424).